The following is a 556-amino-acid chain: MAASCGSSQLPAAEPPLKIPKMEVLSPGSPGALSDGNPSLSDPSTPSGASPLGPGPAAGGAGLGGGGAAGGRGGASPSVSFSPGGAAAAAAAAACRGMSWTPAETNALIAVWGNERLVEARYQQLEGAGTVFGSKAPGPAMYERVSRALAELGYERTPSQCRERIKTLRRCYSRVKEHGVGKRKSSYTFEQLEQVFGQGGWDSQPCQPVLINSSGLYQELESDGSTMEEYSQEDWGNHSQDLHCYQTGEQELDEMPTTKRTLKIKQESSEDAQKRDVMQNIMQILESVQLKWELFQSWTDFSRLHLSNKLAIFGIGYNTRWKEDIRYHYAEISSQVPLGKRLREYFNSEKPEGRVIMTRVQKMNWKNVYYKFLEITISEARCLELHMEIDWIPIAHSKPTGGNVVQYLLPGGIPKSPGLYAIGYEECHEKPRSPLAEPRGADPSNETPGELEVPSPQASLRVEMESARIIYCYLGIAEVRTLQQCLFLHFQANTKTFSKEWVGINAFLSQNCVVEPGVSPKSIYIKFVEVERDFLSAGSLVECLEKAIGYPLKFNN.

Polar residues-rich tracts occupy residues 1–10 (MAASCGSSQL) and 36–45 (GNPSLSDPST). The disordered stretch occupies residues 1 to 82 (MAASCGSSQL…GGASPSVSFS (82 aa)). The segment covering 56–74 (PAAGGAGLGGGGAAGGRGG) has biased composition (gly residues). Residues 99-169 (SWTPAETNAL…QCRERIKTLR (71 aa)) form the Myb-like domain. Residues 431–458 (PRSPLAEPRGADPSNETPGELEVPSPQA) are disordered.

The protein is Myb/SANT-like DNA-binding domain-containing protein 2 (MSANTD2) of Gallus gallus (Chicken).